The chain runs to 338 residues: GTPase Obg (338 aa).

Residues 1–159 form the Obg domain; it reads MQFIDEVKIH…RWLRLELKLL (159 aa). An OBG-type G domain is found at 160 to 331; the sequence is ADVGLLGFPN…LLDEIARSLW (172 aa). GTP contacts are provided by residues 166-173, 191-195, 213-216, 283-286, and 312-314; these read GFPNVGKS, FTTLK, DIPG, NKMD, and SAA. Residues serine 173 and threonine 193 each coordinate Mg(2+).

The protein belongs to the TRAFAC class OBG-HflX-like GTPase superfamily. OBG GTPase family. In terms of assembly, monomer. Mg(2+) serves as cofactor.

The protein localises to the cytoplasm. An essential GTPase which binds GTP, GDP and possibly (p)ppGpp with moderate affinity, with high nucleotide exchange rates and a fairly low GTP hydrolysis rate. Plays a role in control of the cell cycle, stress response, ribosome biogenesis and in those bacteria that undergo differentiation, in morphogenesis control. This chain is GTPase Obg, found in Geobacter sulfurreducens (strain ATCC 51573 / DSM 12127 / PCA).